The chain runs to 106 residues: Phosphoribosyl-ATP pyrophosphatase (106 aa).

Belongs to the PRA-PH family.

Its subcellular location is the cytoplasm. The catalysed reaction is 1-(5-phospho-beta-D-ribosyl)-ATP + H2O = 1-(5-phospho-beta-D-ribosyl)-5'-AMP + diphosphate + H(+). The protein operates within amino-acid biosynthesis; L-histidine biosynthesis; L-histidine from 5-phospho-alpha-D-ribose 1-diphosphate: step 2/9. The polypeptide is Phosphoribosyl-ATP pyrophosphatase (Geotalea daltonii (strain DSM 22248 / JCM 15807 / FRC-32) (Geobacter daltonii)).